The primary structure comprises 583 residues: Nuclear distribution protein nudE homolog 1 (583 aa).

The stretch at 14 to 195 (ATLEDTLGWY…QDKFKKQESR (182 aa)) forms a coiled coil. Disordered stretches follow at residues 34–68 (LAEF…KAET), 211–339 (TFDG…TSNS), and 358–583 (HSVR…GETY). A compositionally biased stretch (basic and acidic residues) spans 35–67 (AEFRDSSRELEQELEKDIERAEKQERHHQEKAE). 5 stretches are compositionally biased toward polar residues: residues 219 to 235 (PGST…TDSK), 279 to 319 (RSRL…TMRT), 329 to 339 (SASNKLPTSNS), 379 to 392 (NVYS…SITI), and 399 to 422 (SGSA…STPK). Over residues 453-469 (RPSSRASTSYATSYARP) the composition is skewed to low complexity. Residues 529 to 538 (RRGTYSSQGG) are compositionally biased toward polar residues.

This sequence belongs to the nudE family. In terms of assembly, self-associates. Interacts with PAC1.

It is found in the cytoplasm. It localises to the cytoskeleton. In terms of biological role, required for nuclear migration. The polypeptide is Nuclear distribution protein nudE homolog 1 (NDE1) (Gibberella zeae (strain ATCC MYA-4620 / CBS 123657 / FGSC 9075 / NRRL 31084 / PH-1) (Wheat head blight fungus)).